The primary structure comprises 1080 residues: Presequence protease 1, chloroplastic/mitochondrial (1080 aa).

The N-terminal 85 residues, 1–85, are a transit peptide targeting the chloroplast and mitochondrion; the sequence is MLRTVSCLAS…GQFSRLSVRA (85 aa). Val86 carries the N-acetylvaline modification. Position 162 (His162) interacts with Zn(2+). Residue Glu165 is the Proton acceptor of the active site. His166 is a binding site for Zn(2+). Glu240 is an active-site residue. Glu262 provides a ligand contact to Zn(2+). Positions 571-612 form a coiled coil; that stretch reads EKATQEEVEEKNILEKVKAAMTEEDLAELARATEELKLKQET. Arg705 serves as a coordination point for Mg(2+).

This sequence belongs to the peptidase M16 family. PreP subfamily. Homodimer. It depends on Zn(2+) as a cofactor. Mg(2+) serves as cofactor. In terms of tissue distribution, expressed only in siliques and flowers.

It localises to the plastid. The protein localises to the chloroplast stroma. The protein resides in the mitochondrion matrix. Its activity is regulated as follows. Inactive in the absence of MgCl(2) and CaCl(2) and full activation at 10 mM concentrations of either ion. Completely inhibited by the metal chelator orthophenanthroline, but not affected by phenylmethylsulfonyl fluoride (PMSF) or N-ethylmaleimide (NEM). In terms of biological role, ATP-independent protease that degrades both mitochondrial and chloroplastic transit peptides after their cleavage. Also degrades other unstructured peptides. Specific for peptides in the range of 10 to 65 residues. Shows a preference for cleavage after small polar residues and before basic residues, with a bias for positively charged amino acid residues. The protein is Presequence protease 1, chloroplastic/mitochondrial (PREP1) of Arabidopsis thaliana (Mouse-ear cress).